A 1335-amino-acid chain; its full sequence is Regulatory-associated protein of mTOR (1335 aa).

Residues serine 44 and serine 122 each carry the phosphoserine modification. Residue serine 696 is modified to Phosphoserine; by MAPK8. O-linked (GlcNAc) threonine glycosylation occurs at threonine 700. Phosphothreonine; by MAPK8 is present on threonine 706. Residues serine 719 and serine 721 each carry the phosphoserine; by RPS6KA1 modification. The residue at position 722 (serine 722) is a Phosphoserine; by AMPK and RPS6KA1. Phosphoserine is present on serine 738. Serine 791 bears the Phosphoserine; by PKA mark. Phosphoserine; by AMPK is present on serine 792. 2 positions are modified to phosphoserine: serine 836 and serine 855. The segment at 850 to 943 (VLDTSSLTQS…PEQTADDADD (94 aa)) is disordered. The segment covering 851–866 (LDTSSLTQSAPASPTN) has biased composition (polar residues). A Phosphoserine; by MTOR modification is found at serine 859. At serine 863 the chain carries Phosphoserine; by MAPK8, MTOR and NLK. Threonine 865 is modified (phosphothreonine). The span at 874–887 (AGGSPPASSTSSSS) shows a compositional bias: low complexity. Serine 877 carries the phosphoserine; by TBK1 modification. Glycyl lysine isopeptide (Lys-Gly) (interchain with G-Cter in ubiquitin) cross-links involve residues lysine 932 and lysine 948. Residue serine 982 is modified to Phosphoserine. 7 WD repeats span residues 1020–1061 (NRNP…DYFH), 1065–1106 (PRYT…EKNP), 1121–1160 (TTRG…KVQD), 1164–1203 (GADS…SECR), 1209–1249 (EHTA…SVNV), 1251–1291 (QIVK…NNIK), and 1299–1335 (QRVG…KRVR). Lysine 1097 is modified (N6-acetyllysine).

It belongs to the WD repeat RAPTOR family. As to quaternary structure, part of the mechanistic target of rapamycin complex 1 (mTORC1) which contains MTOR, MLST8 and RPTOR. mTORC1 associates with AKT1S1/PRAS40, which inhibits its activity. mTORC1 associates with DEPTOR, which regulates its activity. mTORC1 binds to and is inhibited by FKBP12-rapamycin. Forms a complex with MTOR under both leucine-rich and -poor conditions. Interacts with (via TOS motifs) EIF4EBP1 and RPS6KB1; interaction is independent of its association with MTOR. Binds preferentially to poorly or non-phosphorylated forms of EIF4EBP1, and this binding is critical to the ability of MTOR to catalyze phosphorylation. Interacts with ULK1 in a nutrient-dependent manner; the interaction is reduced during starvation. Interacts with GTP-bound form of RagA/RRAGA or RagB/RRAGB and GDP-bound form of RagC/RRAGC or RagD/RRAGD, promoting recruitment of mTORC1 to the lysosomes. Interacts (when phosphorylated by AMPK) with 14-3-3 protein, leading to inhibition of its activity. Interacts with SPAG5; SPAG5 competes with MTOR for RPTOR-binding, resulting in decreased mTORC1 formation. Interacts with WAC; WAC positively regulates MTOR activity by promoting the assembly of the TTT complex composed of TELO2, TTI1 and TTI2 and the RUVBL complex composed of RUVBL1 and RUVBL2 into the TTT-RUVBL complex which leads to the dimerization of the mTORC1 complex and its subsequent activation. Interacts with G3BP1. The complex formed with G3BP1 and SPAG5 is increased by oxidative stress. Interacts with HTR6. Interacts with PIH1D1. Interacts with LARP1. Interacts with BRAT1. Interacts with SIK3. Interacts with SLC38A7; this interaction mediates the recruitment of mTORC1 to the lysosome and its subsequent activation. In terms of assembly, (Microbial infection) Interacts with vaccinia virus protein F17; this interaction dysregulates mTOR. Insulin-stimulated phosphorylation at Ser-863 by MTOR and MAPK8 regulates mTORC1 activity. Phosphorylated at Ser-863 by NLK in response to stress, disrupting the interaction with small GTPases Rag (RagA/RRAGA, RagB/RRAGB, RagC/RRAGC and/or RagD/RRAGD), thereby preventing lysosome recruitment and activation of the mTORC1 complex. Osmotic stress also induces phosphorylation at Ser-696, Thr-706 and Ser-863 by MAPK8. Ser-863 phosphorylation is required for phosphorylation at Ser-855 and Ser-859. In response to nutrient limitation, phosphorylated at Ser-722 and Ser-792 by AMPK; phosphorylation promotes interaction with 14-3-3 proteins, leading to negative regulation of the mTORC1 complex. Phosphorylation at Ser-722 and Ser-792 by AMPK in response to glucose starvation inhibits O-GlcNAcylation by OGT and subsequent activation of mTORC1. In response to growth factors, phosphorylated at Ser-719, Ser-721 and Ser-722 by RPS6KA1, which stimulates mTORC1 activity. Phosphorylation at Ser-791 by PKA downstream of cAMP inhibits the mTORC1 complex. Phosphorylated at Ser-877 by TBK1, leading to negative regulation of the mTORC1 complex. In terms of processing, O-GlcNAcylated by OGT upon glucose sufficiency, promoting interaction with small GTPases Rag (RagA/RRAGA, RagB/RRAGB, RagC/RRAGC and/or RagD/RRAGD) and subsequent recruitment of mTORC1 to lysosomal membranes, leading to activation of the mTORC1 complex. Phosphorylation at Ser-722 and Ser-792 by AMPK in response to glucose starvation inhibits O-GlcNAcylation. Post-translationally, acetylation at Lys-1097 by EP300/p300 in response to leucine metabolite acetyl-coA promotes its activity, leading to activation of the mTORC1 complex. Acetylation is decreased in response to fasting. Ubiquitinated, leading to its degradation by the proteasome. Deubiquitinated by OTUB1 via a non-catalytic mechanism. Ubiquitinated by an E3 ubiquitin ligase complex containing VHL. Highly expressed in skeletal muscle, and in a lesser extent in brain, lung, small intestine, kidney and placenta. As to expression, widely expressed, with highest levels in nasal mucosa and pituitary and lowest in spleen.

Its subcellular location is the lysosome membrane. The protein localises to the cytoplasm. The protein resides in the cytoplasmic granule. Functionally, component of the mechanistic target of rapamycin complex 1 (mTORC1), an evolutionarily conserved central nutrient sensor that stimulates anabolic reactions and macromolecule biosynthesis to promote cellular biomass generation and growth. In response to nutrients, growth factors or amino acids, mTORC1 is recruited to the lysosome membrane and promotes protein, lipid and nucleotide synthesis by phosphorylating several substrates, such as ribosomal protein S6 kinase (RPS6KB1 and RPS6KB2) and EIF4EBP1 (4E-BP1). In the same time, it inhibits catabolic pathways by phosphorylating the autophagy initiation components ULK1 and ATG13, as well as transcription factor TFEB, a master regulators of lysosomal biogenesis and autophagy. The mTORC1 complex is inhibited in response to starvation and amino acid depletion. Within the mTORC1 complex, RPTOR acts both as a molecular adapter, which (1) mediates recruitment of mTORC1 to lysosomal membranes via interaction with small GTPases Rag (RagA/RRAGA, RagB/RRAGB, RagC/RRAGC and/or RagD/RRAGD), and a (2) substrate-specific adapter, which promotes substrate specificity by binding to TOS motif-containing proteins and direct them towards the active site of the MTOR kinase domain for phosphorylation. mTORC1 complex regulates many cellular processes, such as odontoblast and osteoclast differentiation or neuronal transmission. mTORC1 complex in excitatory neuronal transmission is required for the prosocial behavior induced by the psychoactive substance lysergic acid diethylamide (LSD). This Homo sapiens (Human) protein is Regulatory-associated protein of mTOR.